We begin with the raw amino-acid sequence, 405 residues long: Phosphopentomutase (405 aa).

Residues D10, D297, H302, D338, H339, and H350 each contribute to the Mn(2+) site.

The protein belongs to the phosphopentomutase family. Mn(2+) is required as a cofactor.

The protein resides in the cytoplasm. The enzyme catalyses 2-deoxy-alpha-D-ribose 1-phosphate = 2-deoxy-D-ribose 5-phosphate. It catalyses the reaction alpha-D-ribose 1-phosphate = D-ribose 5-phosphate. It participates in carbohydrate degradation; 2-deoxy-D-ribose 1-phosphate degradation; D-glyceraldehyde 3-phosphate and acetaldehyde from 2-deoxy-alpha-D-ribose 1-phosphate: step 1/2. Its function is as follows. Isomerase that catalyzes the conversion of deoxy-ribose 1-phosphate (dRib-1-P) and ribose 1-phosphate (Rib-1-P) to deoxy-ribose 5-phosphate (dRib-5-P) and ribose 5-phosphate (Rib-5-P), respectively. In Pseudoalteromonas translucida (strain TAC 125), this protein is Phosphopentomutase.